We begin with the raw amino-acid sequence, 376 residues long: Erythronate-4-phosphate dehydrogenase (376 aa).

The substrate site is built by serine 45 and threonine 67. NAD(+) is bound at residue aspartate 147. The active site involves arginine 209. Aspartate 233 is an NAD(+) binding site. Glutamate 238 is an active-site residue. The active-site Proton donor is histidine 255. An NAD(+)-binding site is contributed by glycine 258. Residue tyrosine 259 participates in substrate binding.

The protein belongs to the D-isomer specific 2-hydroxyacid dehydrogenase family. PdxB subfamily. Homodimer.

The protein resides in the cytoplasm. It catalyses the reaction 4-phospho-D-erythronate + NAD(+) = (R)-3-hydroxy-2-oxo-4-phosphooxybutanoate + NADH + H(+). It functions in the pathway cofactor biosynthesis; pyridoxine 5'-phosphate biosynthesis; pyridoxine 5'-phosphate from D-erythrose 4-phosphate: step 2/5. Functionally, catalyzes the oxidation of erythronate-4-phosphate to 3-hydroxy-2-oxo-4-phosphonooxybutanoate. The sequence is that of Erythronate-4-phosphate dehydrogenase from Shewanella oneidensis (strain ATCC 700550 / JCM 31522 / CIP 106686 / LMG 19005 / NCIMB 14063 / MR-1).